A 476-amino-acid chain; its full sequence is RuvB-like helicase 2 (476 aa).

72–80 (VGPPSTGKT) contacts ATP.

This sequence belongs to the RuvB family. May form heterododecamers with RVB1. Component of the SWR1 chromatin remodeling complex, the INO80 chromatin remodeling complex, and of the R2TP complex.

The protein resides in the nucleus. The enzyme catalyses ATP + H2O = ADP + phosphate + H(+). Functionally, DNA helicase which participates in several chromatin remodeling complexes, including the SWR1 and the INO80 complexes. The SWR1 complex mediates the ATP-dependent exchange of histone H2A for the H2A variant HZT1 leading to transcriptional regulation of selected genes by chromatin remodeling. The INO80 complex remodels chromatin by shifting nucleosomes and is involved in DNA repair. Also involved in pre-rRNA processing. This is RuvB-like helicase 2 (RVB2) from Mycosarcoma maydis (Corn smut fungus).